The following is a 329-amino-acid chain: GTP 3',8-cyclase (329 aa).

The Radical SAM core domain occupies 8–234; the sequence is AFARKFYYLR…QLRQRSDGPA (227 aa). Arg17 serves as a coordination point for GTP. Residues Cys24 and Cys28 each coordinate [4Fe-4S] cluster. Tyr30 is an S-adenosyl-L-methionine binding site. Residue Cys31 participates in [4Fe-4S] cluster binding. Arg68 is a GTP binding site. Gly72 serves as a coordination point for S-adenosyl-L-methionine. Thr99 provides a ligand contact to GTP. Position 123 (Ser123) interacts with S-adenosyl-L-methionine. Residue Lys160 participates in GTP binding. An S-adenosyl-L-methionine-binding site is contributed by Met194. [4Fe-4S] cluster-binding residues include Cys257 and Cys260. 262–264 contacts GTP; that stretch reads RLR. Cys274 is a [4Fe-4S] cluster binding site.

It belongs to the radical SAM superfamily. MoaA family. As to quaternary structure, monomer and homodimer. Requires [4Fe-4S] cluster as cofactor.

The enzyme catalyses GTP + AH2 + S-adenosyl-L-methionine = (8S)-3',8-cyclo-7,8-dihydroguanosine 5'-triphosphate + 5'-deoxyadenosine + L-methionine + A + H(+). Its pathway is cofactor biosynthesis; molybdopterin biosynthesis. Its function is as follows. Catalyzes the cyclization of GTP to (8S)-3',8-cyclo-7,8-dihydroguanosine 5'-triphosphate. This chain is GTP 3',8-cyclase, found in Escherichia coli O45:K1 (strain S88 / ExPEC).